The following is a 708-amino-acid chain: Radial spoke head protein 6 homolog A (708 aa).

Disordered regions lie at residues methionine 1 to proline 94, glutamate 376 to lysine 407, glutamate 495 to asparagine 514, and glycine 663 to aspartate 708. The segment covering proline 10 to leucine 32 has biased composition (polar residues). A compositionally biased stretch (low complexity) spans arginine 47 to glutamine 56. Residues glutamate 495–glycine 504 show a composition bias toward acidic residues. Residues leucine 680–alanine 690 are compositionally biased toward low complexity. The span at alanine 691–aspartate 708 shows a compositional bias: acidic residues.

It belongs to the flagellar radial spoke RSP4/6 family. Component of the axonemal radial spoke 1 (RS1) and 2 (RS2) complexes, at least composed of spoke head proteins RSPH1, RSPH3, RSPH9 and the cilia-specific component RSPH4A or sperm-specific component RSPH6A, spoke stalk proteins RSPH14, DNAJB13, DYDC1, ROPN1L and NME5, and the RS1 complex-specific anchor protein IQUB. Interacts with RSPH1. Interacts with RSPH3B. Interacts with RSPH4A. Interacts with RSPH9. Interacts with RSPH10B. Phosphorylated by PKA. Phosphorylation increases in capacitated sperm. Expressed in sperm and testis (at protein level).

It is found in the cytoplasm. The protein resides in the cytoskeleton. It localises to the flagellum axoneme. Its function is as follows. Functions as part of radial spoke complexes in the axoneme of sperm flagella that play an important part in motility. The triple radial spokes (RS1, RS2 and RS3) are required to modulate beating of the sperm flagellum. The protein is Radial spoke head protein 6 homolog A of Mus musculus (Mouse).